Reading from the N-terminus, the 149-residue chain is Arginine repressor (149 aa).

This sequence belongs to the ArgR family.

It is found in the cytoplasm. Its pathway is amino-acid biosynthesis; L-arginine biosynthesis [regulation]. In terms of biological role, regulates arginine biosynthesis genes. The sequence is that of Arginine repressor from Bacillus mycoides (strain KBAB4) (Bacillus weihenstephanensis).